A 208-amino-acid polypeptide reads, in one-letter code: ATP-dependent Clp protease proteolytic subunit (208 aa).

S98 serves as the catalytic Nucleophile. H123 is a catalytic residue.

The protein belongs to the peptidase S14 family. In terms of assembly, fourteen ClpP subunits assemble into 2 heptameric rings which stack back to back to give a disk-like structure with a central cavity, resembling the structure of eukaryotic proteasomes.

It is found in the cytoplasm. It catalyses the reaction Hydrolysis of proteins to small peptides in the presence of ATP and magnesium. alpha-casein is the usual test substrate. In the absence of ATP, only oligopeptides shorter than five residues are hydrolyzed (such as succinyl-Leu-Tyr-|-NHMec, and Leu-Tyr-Leu-|-Tyr-Trp, in which cleavage of the -Tyr-|-Leu- and -Tyr-|-Trp bonds also occurs).. Its function is as follows. Cleaves peptides in various proteins in a process that requires ATP hydrolysis. Has a chymotrypsin-like activity. Plays a major role in the degradation of misfolded proteins. This is ATP-dependent Clp protease proteolytic subunit from Wolbachia sp. subsp. Brugia malayi (strain TRS).